The sequence spans 317 residues: Peroxidase 64 (317 aa).

The signal sequence occupies residues 1–22 (MNAHMLNLLVIVIFVVSFDVQA). Cystine bridges form between Cys-32/Cys-111, Cys-65/Cys-70, Cys-117/Cys-313, and Cys-195/Cys-227. Residue His-63 is the Proton acceptor of the active site. Positions 64, 67, 69, 71, and 73 each coordinate Ca(2+). Residue Pro-158 coordinates substrate. N-linked (GlcNAc...) asparagine glycosylation occurs at Asn-163. His-188 contributes to the heme b binding site. Residue Thr-189 participates in Ca(2+) binding. 3 residues coordinate Ca(2+): Asp-241, Thr-243, and Asp-248.

This sequence belongs to the peroxidase family. Classical plant (class III) peroxidase subfamily. Heme b serves as cofactor. It depends on Ca(2+) as a cofactor. In terms of tissue distribution, expressed in the whole plant, but preferentially in roots.

It is found in the secreted. The catalysed reaction is 2 a phenolic donor + H2O2 = 2 a phenolic radical donor + 2 H2O. Its function is as follows. Removal of H(2)O(2), oxidation of toxic reductants, biosynthesis and degradation of lignin, suberization, auxin catabolism, response to environmental stresses such as wounding, pathogen attack and oxidative stress. These functions might be dependent on each isozyme/isoform in each plant tissue. The protein is Peroxidase 64 (PER64) of Arabidopsis thaliana (Mouse-ear cress).